Here is a 149-residue protein sequence, read N- to C-terminus: Cytochrome c oxidase subunit 5A, mitochondrial (149 aa).

This sequence belongs to the cytochrome c oxidase subunit 5A family. In terms of assembly, component of the cytochrome c oxidase (complex IV, CIV), a multisubunit enzyme composed of a catalytic core of 3 subunits and several supernumerary subunits. The complex exists as a monomer or a dimer and forms supercomplexes (SCs) in the inner mitochondrial membrane with ubiquinol-cytochrome c oxidoreductase (cytochrome b-c1 complex, complex III, CIII).

It localises to the mitochondrion inner membrane. It functions in the pathway energy metabolism; oxidative phosphorylation. Functionally, component of the cytochrome c oxidase, the last enzyme in the mitochondrial electron transport chain which drives oxidative phosphorylation. The respiratory chain contains 3 multisubunit complexes succinate dehydrogenase (complex II, CII), ubiquinol-cytochrome c oxidoreductase (cytochrome b-c1 complex, complex III, CIII) and cytochrome c oxidase (complex IV, CIV), that cooperate to transfer electrons derived from NADH and succinate to molecular oxygen, creating an electrochemical gradient over the inner membrane that drives transmembrane transport and the ATP synthase. Cytochrome c oxidase is the component of the respiratory chain that catalyzes the reduction of oxygen to water. Electrons originating from reduced cytochrome c in the intermembrane space (IMS) are transferred via the dinuclear copper A center (CU(A)) of subunit 2 and heme A of subunit 1 to the active site in subunit 1, a binuclear center (BNC) formed by heme A3 and copper B (CU(B)). The BNC reduces molecular oxygen to 2 water molecules using 4 electrons from cytochrome c in the IMS and 4 protons from the mitochondrial matrix. The chain is Cytochrome c oxidase subunit 5A, mitochondrial from Drosophila melanogaster (Fruit fly).